A 644-amino-acid chain; its full sequence is Threonine--tRNA ligase (644 aa).

A TGS domain is found at 1–61; that stretch reads MVAITLPDGN…TQDASVEIVT (61 aa). Residues 242–533 form a catalytic region; it reads DHRKIGKALN…LIEHYAGWMP (292 aa). Zn(2+) is bound by residues Cys-333, His-384, and His-510.

This sequence belongs to the class-II aminoacyl-tRNA synthetase family. Homodimer. Requires Zn(2+) as cofactor.

The protein resides in the cytoplasm. It catalyses the reaction tRNA(Thr) + L-threonine + ATP = L-threonyl-tRNA(Thr) + AMP + diphosphate + H(+). Catalyzes the attachment of threonine to tRNA(Thr) in a two-step reaction: L-threonine is first activated by ATP to form Thr-AMP and then transferred to the acceptor end of tRNA(Thr). Also edits incorrectly charged L-seryl-tRNA(Thr). The sequence is that of Threonine--tRNA ligase from Psychrobacter sp. (strain PRwf-1).